An 87-amino-acid polypeptide reads, in one-letter code: Small ribosomal subunit protein bS18 (87 aa).

It belongs to the bacterial ribosomal protein bS18 family. In terms of assembly, part of the 30S ribosomal subunit. Forms a tight heterodimer with protein bS6.

Binds as a heterodimer with protein bS6 to the central domain of the 16S rRNA, where it helps stabilize the platform of the 30S subunit. This is Small ribosomal subunit protein bS18 from Oleidesulfovibrio alaskensis (strain ATCC BAA-1058 / DSM 17464 / G20) (Desulfovibrio alaskensis).